Here is a 250-residue protein sequence, read N- to C-terminus: Agamous-like MADS-box protein AGL9 homolog (250 aa).

The 55-residue stretch at 3–57 (RGRVELKMIENKINRQVTFAKRRKRLLKKAYELSVLCDAEVALIIFSNRGKLYEF) folds into the MADS-box domain. In terms of domain architecture, K-box spans 87–177 (TQSSQQEYLK…KRRFEESSQA (91 aa)).

In terms of tissue distribution, expressed in petals and weakly in sepals but not in the column (gynostemium).

Its subcellular location is the nucleus. Functionally, probable transcription factor active in inflorescence development and floral organogenesis. In Aranda deborah (Orchid), this protein is Agamous-like MADS-box protein AGL9 homolog.